We begin with the raw amino-acid sequence, 128 residues long: uncharacterized protein (128 aa).

High expression in pituitary gland and weak in pancreas.

This is an uncharacterized protein from Homo sapiens (Human).